A 668-amino-acid polypeptide reads, in one-letter code: Fructose-1,6-bisphosphatase class 3 (668 aa).

The protein belongs to the FBPase class 3 family. Requires Mn(2+) as cofactor.

The enzyme catalyses beta-D-fructose 1,6-bisphosphate + H2O = beta-D-fructose 6-phosphate + phosphate. It participates in carbohydrate biosynthesis; gluconeogenesis. The polypeptide is Fructose-1,6-bisphosphatase class 3 (Clostridium botulinum (strain Langeland / NCTC 10281 / Type F)).